The primary structure comprises 965 residues: Chondroitin synthase (965 aa).

Positions 132 to 418 (FTWYKNRKKS…IVKEKVPYIY (287 aa)) are galactosaminyltransferase; A1 domain. UDP-N-acetyl-alpha-D-galactosamine is bound by residues Pro158, Arg162, Asp189, Tyr218, Arg224, and 240 to 241 (DC). Asp242 contacts Mn(2+). Position 362-363 (362-363 (ED)) interacts with UDP-N-acetyl-alpha-D-galactosamine. His387 is a Mn(2+) binding site. Residues 419 to 683 (RKLLPIEDSH…ESRKYIFNKT (265 aa)) are glucuronosyltransferase; A2 domain. UDP-alpha-D-glucuronate contacts are provided by residues Tyr442, Asp470, and 518–521 (QLDS). Asp522 contributes to the Mn(2+) binding site. Residues His582 and 604 to 605 (AV) each bind UDP-alpha-D-glucuronate. Residue His632 coordinates Mn(2+).

Belongs to the glycosyltransferase 2 family. CS/HAS subfamily. Mn(2+) serves as cofactor.

It is found in the cell membrane. It catalyses the reaction 3-O-(beta-D-GlcA-(1-&gt;3)-beta-D-GalNAc-(1-&gt;4)-beta-D-GlcA-(1-&gt;3)-beta-D-Gal-(1-&gt;3)-beta-D-Gal-(1-&gt;4)-beta-D-Xyl)-L-seryl-[protein] + UDP-N-acetyl-alpha-D-galactosamine = 3-O-(beta-D-GalNAc-(1-&gt;4)-beta-D-GlcA-(1-&gt;3)-beta-D-GalNAc-(1-&gt;4)-beta-D-GlcA-(1-&gt;3)-beta-D-Gal-(1-&gt;3)-beta-D-Gal-(1-&gt;4)-beta-D-Xyl)-L-seryl-[protein] + UDP + H(+). The enzyme catalyses 3-O-{beta-D-GlcA-(1-&gt;3)-[beta-D-GalNAc-(1-&gt;4)-beta-D-GlcA-(1-&gt;3)](n)-beta-D-GalNAc-(1-&gt;4)-beta-D-GlcA-(1-&gt;3)-beta-D-Gal-(1-&gt;3)-beta-D-Gal-(1-&gt;4)-beta-D-Xyl}-L-seryl-[protein] + UDP-N-acetyl-alpha-D-galactosamine = 3-O-{[beta-D-GalNAc-(1-&gt;4)-beta-D-GlcA-(1-&gt;3)](n+1)-beta-D-GalNAc-(1-&gt;4)-beta-D-GlcA-(1-&gt;3)-beta-D-Gal-(1-&gt;3)-beta-D-Gal-(1-&gt;4)-beta-D-Xyl}-L-seryl-[protein] + UDP + H(+). It carries out the reaction 3-O-(beta-D-GalNAc-(1-&gt;4)-beta-D-GlcA-(1-&gt;3)-beta-D-Gal-(1-&gt;3)-beta-D-Gal-(1-&gt;4)-beta-D-Xyl)-L-seryl-[protein] + UDP-alpha-D-glucuronate = 3-O-(beta-D-GlcA-(1-&gt;3)-beta-D-GalNAc-(1-&gt;4)-beta-D-GlcA-(1-&gt;3)-beta-D-Gal-(1-&gt;3)-beta-D-Gal-(1-&gt;4)-beta-D-Xyl)-L-seryl-[protein] + UDP + H(+). The catalysed reaction is 3-O-{[beta-D-GalNAc-(1-&gt;4)-beta-D-GlcA-(1-&gt;3)](n)-beta-D-GalNAc-(1-&gt;4)-beta-D-GlcA-(1-&gt;3)-beta-D-Gal-(1-&gt;3)-beta-D-Gal-(1-&gt;4)-beta-D-Xyl}-L-seryl-[protein] + UDP-alpha-D-glucuronate = 3-O-{beta-D-GlcA-(1-&gt;3)-[beta-D-GalNAc-(1-&gt;4)-beta-D-GlcA-(1-&gt;3)](n)-beta-D-GalNAc-(1-&gt;4)-beta-D-GlcA-(1-&gt;3)-beta-D-Gal-(1-&gt;3)-beta-D-Gal-(1-&gt;4)-beta-D-Xyl}-L-seryl-[protein] + UDP + H(+). Glycosyltransferase that catalyzes elongation of chondroitin, a polysaccharide composed of a repeating disaccharide of N-acetylgalactosamine (GalNAc) and glucuronic acid (GlcUA) units, by alternatively transferring the GlcUA and GalNAc moiety from UDP-GlcUA and UDP-GalNAc to the non-reducing ends of the chondroitin chain. Each chondroitin unit has the composition beta-(1-&gt;4)-GlcUA-beta-(1-&gt;3)-GalNAc. The sequence is that of Chondroitin synthase (fcbD) from Pasteurella multocida (strain Pm70).